A 246-amino-acid polypeptide reads, in one-letter code: Putative F-box/LRR-repeat protein 9 (246 aa).

The 48-residue stretch at 18 to 65 (YRNWAELPPELTSSILLRLGAIEILQNAQRVCKSWRRVCQDPSMWRKI) folds into the F-box domain.

This is Putative F-box/LRR-repeat protein 9 (FBL9) from Arabidopsis thaliana (Mouse-ear cress).